Consider the following 198-residue polypeptide: 5'-deoxynucleotidase hdd1 (198 aa).

The HD domain occupies 38 to 144 (IADHMYRMGI…VKDIDKFEMI (107 aa)). A divalent metal cation is bound by residues His-41, His-69, Asp-70, Glu-73, Asp-78, Ile-79, and Asp-139.

Belongs to the HDDC2 family. In terms of assembly, homodimer. The cofactor is Mn(2+). It depends on Co(2+) as a cofactor. Mg(2+) is required as a cofactor.

It localises to the cytoplasm. The protein localises to the nucleus. The catalysed reaction is a 2'-deoxyribonucleoside 5'-phosphate + H2O = a 2'-deoxyribonucleoside + phosphate. Its function is as follows. Catalyzes the dephosphorylation of the nucleoside 5'-monophosphates deoxyadenosine monophosphate (dAMP), deoxycytidine monophosphate (dCMP), deoxyguanosine monophosphate (dGMP) and deoxythymidine monophosphate (dTMP). This is 5'-deoxynucleotidase hdd1 from Schizosaccharomyces pombe (strain 972 / ATCC 24843) (Fission yeast).